A 1317-amino-acid polypeptide reads, in one-letter code: MASVKVAVRVRPMNRREKDLEAKFIIQMEKSKTTITNLKIPEGGTGDSGRERTKTFTYDFSFYSADTKSPDYVSQEMVFKTLGTDVVKSAFEGYNACVFAYGQTGSGKSYTMMGNSGDSGLIPRICEGLFSRINETTRWDEASFRTEVSYLEIYNERVRDLLRRKSSKTFNLRVREHPKEGPYVEDLSKHLVQNYGDVEELMDAGNINRTTAATGMNDVSSRSHAIFTIKFTQAKFDSEMPCETVSKIHLVDLAGSERADATGATGVRLKEGGNINKSLVTLGNVISALADLSQDAANTLAKKKQVFVPYRDSVLTWLLKDSLGGNSKTIMIATISPADVNYGETLSTLRYANRAKNIINKPTINEDANVKLIRELRAEIARLKTLLAQGNQIALLDSPTALSMEEKLQQNEARVQELTKEWTNKWNETQNILKEQTLALRKEGIGVVLDSELPHLIGIDDDLLSTGIILYHLKEGQTYVGRDDASTEQDIVLHGLDLESEHCIFENIGGTVTLIPLSGSQCSVNGVQIVEATHLNQGAVILLGRTNMFRFNHPKEAAKLREKRKSGLLSSFSLSMTDLSKSRENLSAVMLYNPGLEFERQQREELEKLESKRKLIEEMEEKQKSDKAELERMQQEVETQRKETEIVQLQIRKQEESLKRRSFHIENKLKDLLAEKEKFEEERLREQQEIELQKKRQEEETFLRVQEELQRLKELNNNEKAEKFQIFQELDQLQKEKDEQYAKLELEKKRLEEQEKEQVMLVAHLEEQLREKQEMIQLLRRGEVQWVEEEKRDLEGIRESLLRVKEARAGGDEDGEELEKAQLRFFEFKRRQLVKLVNLEKDLVQQKDILKKEVQEEQEILECLKCEHDKESRLLEKHDESVTDVTEVPQDFEKIKPVEYRLQYKERQLQYLLQNHLPTLLEEKQRAFEILDRGPLSLDNTLYQVEKEMEEKEEQLAQYQANANQLQKLQATFEFTANIARQEEKVRKKEKEILESREKQQREALERALARLERRHSALQRHSTLGMEIEEQRQKLASLNSGSREQSGLQASLEAEQEALEKDQERLEYEIQQLKQKIYEVDGVQKDHHGTLEGKVASSSLPVSAEKSHLVPLMDARINAYIEEEVQRRLQDLHRVISEGCSTSADTMKDNEKLHNGTIQRKLKYERMVSRSLGANPDDLKDPIKISIPRYVLCGQGKDAHFEFEVKITVLDETWTVFRRYSRFREMHKTLKLKYAELAALEFPPKKLFGNKDERVIAERRSHLEKYLRDFFSVMLQSATSPLHINKVGLTLSKHTICEFSPFFKKGVFDYSSHGTG.

One can recognise a Kinesin motor domain in the interval 3–358; sequence SVKVAVRVRP…LRYANRAKNI (356 aa). 102–109 contacts ATP; that stretch reads GQTGSGKS. Residues 370 to 425 adopt a coiled-coil conformation; that stretch reads VKLIRELRAEIARLKTLLAQGNQIALLDSPTALSMEEKLQQNEARVQELTKEWTNK. Residue serine 398 is modified to Phosphoserine. One can recognise an FHA domain in the interval 478 to 529; it reads TYVGRDDASTEQDIVLHGLDLESEHCIFENIGGTVTLIPLSGSQCSVNGVQI. Threonine 577 is subject to Phosphothreonine. Serine 582 is modified (phosphoserine). 2 coiled-coil regions span residues 595 to 882 and 936 to 1087; these read GLEF…DESV and LSLD…VQKD. Residues 1036–1048 show a composition bias toward polar residues; sequence LASLNSGSREQSG. The disordered stretch occupies residues 1036-1057; sequence LASLNSGSREQSGLQASLEAEQ. The residue at position 1052 (serine 1052) is a Phosphoserine. In terms of domain architecture, PX spans 1182-1296; that stretch reads DPIKISIPRY…KVGLTLSKHT (115 aa).

Belongs to the TRAFAC class myosin-kinesin ATPase superfamily. Kinesin family. As to quaternary structure, interacts with RAB14. Interacts with PTPN21. As to expression, primarily expressed in brain. Also present in kidney, liver, intestine, placenta, leukocytes, heart and skeletal muscle (at protein level).

Its subcellular location is the cytoplasm. It localises to the cytoskeleton. It is found in the early endosome membrane. The protein localises to the spindle. In terms of biological role, plus end-directed microtubule-dependent motor protein involved in endosome transport and receptor recycling and degradation. Regulates the plus end motility of early endosomes and the balance between recycling and degradation of receptors such as EGF receptor (EGFR) and FGF receptor (FGFR). Regulates the Golgi to endosome transport of FGFR-containing vesicles during early development, a key process for developing basement membrane and epiblast and primitive endoderm lineages during early postimplantation development. The protein is Kinesin-like protein KIF16B (KIF16B) of Homo sapiens (Human).